We begin with the raw amino-acid sequence, 388 residues long: S-adenosylmethionine synthase 1 (388 aa).

Mg(2+) is bound at residue E11. H17 provides a ligand contact to ATP. E45 is a binding site for K(+). E58 and Q101 together coordinate L-methionine. ATP-binding positions include 168 to 170 (DAK), 233 to 236 (SGRF), D244, 250 to 251 (RK), A267, K271, and K275. L-methionine is bound at residue D244. Position 275 (K275) interacts with L-methionine.

This sequence belongs to the AdoMet synthase family. As to quaternary structure, homotetramer. Mn(2+) serves as cofactor. Requires Mg(2+) as cofactor. It depends on Co(2+) as a cofactor. The cofactor is K(+). As to expression, mostly in Roots.

It is found in the cytoplasm. It carries out the reaction L-methionine + ATP + H2O = S-adenosyl-L-methionine + phosphate + diphosphate. It participates in amino-acid biosynthesis; S-adenosyl-L-methionine biosynthesis; S-adenosyl-L-methionine from L-methionine: step 1/1. Catalyzes the formation of S-adenosylmethionine from methionine and ATP. The reaction comprises two steps that are both catalyzed by the same enzyme: formation of S-adenosylmethionine (AdoMet) and triphosphate, and subsequent hydrolysis of the triphosphate. The protein is S-adenosylmethionine synthase 1 (SAMS1) of Pinus contorta (Shore pine).